An 85-amino-acid chain; its full sequence is Elicitor peptide 7 (85 aa).

The propeptide occupies 1–62 (MEGEGRREDG…TEVVNIPRSV (62 aa)). The tract at residues 66–85 (NVAARKGKQQTSSGKGGGTN) is disordered.

The protein belongs to the brassicaceae elicitor peptide family.

In terms of biological role, elicitor of plant defense. The chain is Elicitor peptide 7 (PEP7) from Arabidopsis thaliana (Mouse-ear cress).